We begin with the raw amino-acid sequence, 391 residues long: 3-ketoacyl-CoA thiolase (391 aa).

The active-site Acyl-thioester intermediate is the Cys-95. Catalysis depends on proton acceptor residues His-347 and Cys-377.

It belongs to the thiolase-like superfamily. Thiolase family. As to quaternary structure, heterotetramer of two alpha chains (FadB) and two beta chains (FadA).

The protein localises to the cytoplasm. The enzyme catalyses an acyl-CoA + acetyl-CoA = a 3-oxoacyl-CoA + CoA. The protein operates within lipid metabolism; fatty acid beta-oxidation. Catalyzes the final step of fatty acid oxidation in which acetyl-CoA is released and the CoA ester of a fatty acid two carbons shorter is formed. The chain is 3-ketoacyl-CoA thiolase from Pseudomonas savastanoi pv. phaseolicola (strain 1448A / Race 6) (Pseudomonas syringae pv. phaseolicola (strain 1448A / Race 6)).